Here is a 525-residue protein sequence, read N- to C-terminus: GMP synthase [glutamine-hydrolyzing] (525 aa).

Positions 9–207 constitute a Glutamine amidotransferase type-1 domain; it reads RILILDFGSQ…VLDICGCDAL (199 aa). Residue Cys-86 is the Nucleophile of the active site. Residues His-181 and Glu-183 contribute to the active site. The GMPS ATP-PPase domain occupies 208 to 400; sequence WTSAAIIEDT…LGLPYDMLYR (193 aa). 235–241 is a binding site for ATP; that stretch reads SGGVDSS.

Homodimer.

It carries out the reaction XMP + L-glutamine + ATP + H2O = GMP + L-glutamate + AMP + diphosphate + 2 H(+). Its pathway is purine metabolism; GMP biosynthesis; GMP from XMP (L-Gln route): step 1/1. Functionally, catalyzes the synthesis of GMP from XMP. The protein is GMP synthase [glutamine-hydrolyzing] of Proteus mirabilis (strain HI4320).